A 509-amino-acid chain; its full sequence is Histidine ammonia-lyase (509 aa).

A cross-link (5-imidazolinone (Ala-Gly)) is located at residues A144 to G146. S145 is modified (2,3-didehydroalanine (Ser)).

The protein belongs to the PAL/histidase family. In terms of processing, contains an active site 4-methylidene-imidazol-5-one (MIO), which is formed autocatalytically by cyclization and dehydration of residues Ala-Ser-Gly.

The protein localises to the cytoplasm. It catalyses the reaction L-histidine = trans-urocanate + NH4(+). It functions in the pathway amino-acid degradation; L-histidine degradation into L-glutamate; N-formimidoyl-L-glutamate from L-histidine: step 1/3. This is Histidine ammonia-lyase from Pseudoalteromonas atlantica (strain T6c / ATCC BAA-1087).